Consider the following 782-residue polypeptide: Beta-mannosyltransferase 9 (782 aa).

At 1–26 the chain is on the cytoplasmic side; it reads MEKLIQSTISLFISLSLKISTKSYKS. The chain crosses the membrane as a helical span at residues 27 to 47; the sequence is IISILFIISLLSIILTTTITV. Residues 48–782 are Extracellular-facing; sequence YHDPERIITT…GKDKGKDKSN (735 aa). The interval 66-96 is disordered; that stretch reads KSVFTASSPKQQDKLQQEIDQHQSDNSHEQQ. The segment covering 76 to 96 has biased composition (basic and acidic residues); that stretch reads QQDKLQQEIDQHQSDNSHEQQ. N-linked (GlcNAc...) asparagine glycosylation is found at Asn-445, Asn-648, and Asn-699.

It belongs to the BMT family.

The protein resides in the membrane. Functionally, beta-mannosyltransferase involved in cell wall biosynthesis through beta-1,2-mannosylation of cell wall phosphopeptidomannan. The protein is Beta-mannosyltransferase 9 (BMT9) of Candida albicans (strain SC5314 / ATCC MYA-2876) (Yeast).